The sequence spans 261 residues: Cytochrome c oxidase subunit 3 (261 aa).

At 1 to 15 (MTHQTHAYHMVNPSP) the chain is on the mitochondrial matrix side. Residues 16–34 (WPLTGALSALLLTSGLIMW) form a helical membrane-spanning segment. Residues 35-40 (FHFNSF) are Mitochondrial intermembrane-facing. A helical transmembrane segment spans residues 41–66 (LLVIIGLTCMLLTMYQWWRDIVREGT). Over 67–72 (FQGHHT) the chain is Mitochondrial matrix. Residues 73-105 (PVVQKGLRYGMVLFIVSEVFFFLGFFWAFYHSS) traverse the membrane as a helical segment. Residues 106–128 (LAPTPELGGCWPPTGIHPLNPLE) lie on the Mitochondrial intermembrane side of the membrane. A helical transmembrane segment spans residues 129-152 (VPLLNTSILLASGVSITWAHHSLM). Residues 153–155 (EGN) are Mitochondrial matrix-facing. The helical transmembrane segment at 156–183 (RKQMIQALSITILLGIYFTILQASEYYE) threads the bilayer. Topologically, residues 184–190 (SSFTISD) are mitochondrial intermembrane. Residues 191–223 (GVYGSTFFVATGFHGLHVIIGTTFLIVCLLRQF) form a helical membrane-spanning segment. At 224-232 (NFHFTSTHH) the chain is on the mitochondrial matrix side. Residues 233–256 (FGFEAAAWYWHFVDVVWLFLYVSI) form a helical membrane-spanning segment. Residues 257-261 (YWWGS) are Mitochondrial intermembrane-facing.

Belongs to the cytochrome c oxidase subunit 3 family. Component of the cytochrome c oxidase (complex IV, CIV), a multisubunit enzyme composed of 14 subunits. The complex is composed of a catalytic core of 3 subunits MT-CO1, MT-CO2 and MT-CO3, encoded in the mitochondrial DNA, and 11 supernumerary subunits COX4I, COX5A, COX5B, COX6A, COX6B, COX6C, COX7A, COX7B, COX7C, COX8 and NDUFA4, which are encoded in the nuclear genome. The complex exists as a monomer or a dimer and forms supercomplexes (SCs) in the inner mitochondrial membrane with NADH-ubiquinone oxidoreductase (complex I, CI) and ubiquinol-cytochrome c oxidoreductase (cytochrome b-c1 complex, complex III, CIII), resulting in different assemblies (supercomplex SCI(1)III(2)IV(1) and megacomplex MCI(2)III(2)IV(2)).

Its subcellular location is the mitochondrion inner membrane. It carries out the reaction 4 Fe(II)-[cytochrome c] + O2 + 8 H(+)(in) = 4 Fe(III)-[cytochrome c] + 2 H2O + 4 H(+)(out). Component of the cytochrome c oxidase, the last enzyme in the mitochondrial electron transport chain which drives oxidative phosphorylation. The respiratory chain contains 3 multisubunit complexes succinate dehydrogenase (complex II, CII), ubiquinol-cytochrome c oxidoreductase (cytochrome b-c1 complex, complex III, CIII) and cytochrome c oxidase (complex IV, CIV), that cooperate to transfer electrons derived from NADH and succinate to molecular oxygen, creating an electrochemical gradient over the inner membrane that drives transmembrane transport and the ATP synthase. Cytochrome c oxidase is the component of the respiratory chain that catalyzes the reduction of oxygen to water. Electrons originating from reduced cytochrome c in the intermembrane space (IMS) are transferred via the dinuclear copper A center (CU(A)) of subunit 2 and heme A of subunit 1 to the active site in subunit 1, a binuclear center (BNC) formed by heme A3 and copper B (CU(B)). The BNC reduces molecular oxygen to 2 water molecules using 4 electrons from cytochrome c in the IMS and 4 protons from the mitochondrial matrix. In Osphranter robustus (Wallaroo), this protein is Cytochrome c oxidase subunit 3 (MT-CO3).